The following is a 423-amino-acid chain: Phosphoribosylamine--glycine ligase (423 aa).

The 208-residue stretch at 107–314 (KAFMAKYNIP…LSDLVEAAID (208 aa)) folds into the ATP-grasp domain. Position 133–194 (133–194 (VNQKGAPIVI…EDFLQGEEAS (62 aa))) interacts with ATP. Mg(2+) is bound by residues Glu-284 and Asn-286.

It belongs to the GARS family. The cofactor is Mg(2+). Requires Mn(2+) as cofactor.

It catalyses the reaction 5-phospho-beta-D-ribosylamine + glycine + ATP = N(1)-(5-phospho-beta-D-ribosyl)glycinamide + ADP + phosphate + H(+). It functions in the pathway purine metabolism; IMP biosynthesis via de novo pathway; N(1)-(5-phospho-D-ribosyl)glycinamide from 5-phospho-alpha-D-ribose 1-diphosphate: step 2/2. This chain is Phosphoribosylamine--glycine ligase, found in Neisseria meningitidis serogroup B (strain ATCC BAA-335 / MC58).